We begin with the raw amino-acid sequence, 186 residues long: Putative 3-methyladenine DNA glycosylase (186 aa).

The protein belongs to the DNA glycosylase MPG family.

The polypeptide is Putative 3-methyladenine DNA glycosylase (Borrelia garinii subsp. bavariensis (strain ATCC BAA-2496 / DSM 23469 / PBi) (Borreliella bavariensis)).